Reading from the N-terminus, the 59-residue chain is MRQLKGKPKKETSKDKRERKQAMQDARKQVATVVLPTVAVVVLLIVFFVYAATRPGAIA.

A disordered region spans residues 1–23; sequence MRQLKGKPKKETSKDKRERKQAM. Over residues 9–23 the composition is skewed to basic and acidic residues; sequence KKETSKDKRERKQAM. A coiled-coil region spans residues 9 to 30; sequence KKETSKDKRERKQAMQDARKQV. A helical transmembrane segment spans residues 32–52; the sequence is TVVLPTVAVVVLLIVFFVYAA.

It belongs to the SMCO4 family.

Its subcellular location is the membrane. The sequence is that of Single-pass membrane and coiled-coil domain-containing protein 4 (smco4) from Takifugu rubripes (Japanese pufferfish).